A 436-amino-acid polypeptide reads, in one-letter code: Repulsive guidance molecule B (436 aa).

The first 48 residues, 1–48, serve as a signal peptide directing secretion; that stretch reads MGVRAAPSCAAAPAAAGAEQSRRPGLWPPSPPPPLLLLLLLSLGLLHA. N-linked (GlcNAc...) asparagine glycosylation is present at Asn123. 2 cysteine pairs are disulfide-bonded: Cys142/Cys229 and Cys166/Cys315. N-linked (GlcNAc...) asparagine glycosylation occurs at Asn386. A lipid anchor (GPI-anchor amidated cysteine) is attached at Cys415. The propeptide at 416 to 436 is removed in mature form; it reads GGCRDLPVGLGLTCLILIMFL.

It belongs to the repulsive guidance molecule (RGM) family. As to quaternary structure, homooligomer. Interacts with DRGX. Interacts with BMP2 and BMP4. Interacts with the BMP type I receptors ACVR1, BMPR1A and BMPR1B and with the BMP type II receptor ACVR2B. The functional complex with its receptor NEO1/neogenin appears to be a heterotetramer with a 2:2 stoichiometry, RGM molecules acting as staples that bring two NEO1 receptors together without interacting themselves, this arrangement leads to activation of downstream signaling via RhoA. Post-translationally, GPI-anchored. Autocatalytically cleaved at low pH; the two chains remain linked via two disulfide bonds. In terms of tissue distribution, detected in neonatal and adult dorsal root ganglion sensory neurons, spinal cord, and brain (at protein level). Also expressed at high levels in retinal ganglion cells of developing mouse, extending to the optic nerve (at protein level). Expressed in testis, epididymis, ovary, uterus, and pituitary.

It localises to the cell membrane. It is found in the membrane raft. Member of the repulsive guidance molecule (RGM) family that contributes to the patterning of the developing nervous system. Acts as a bone morphogenetic protein (BMP) coreceptor that potentiates BMP signaling. Promotes neuronal adhesion. May inhibit neurite outgrowth. The sequence is that of Repulsive guidance molecule B from Mus musculus (Mouse).